The following is a 465-amino-acid chain: Uronate isomerase (465 aa).

It belongs to the metallo-dependent hydrolases superfamily. Uronate isomerase family.

The enzyme catalyses D-glucuronate = D-fructuronate. The catalysed reaction is aldehydo-D-galacturonate = keto-D-tagaturonate. Its pathway is carbohydrate metabolism; pentose and glucuronate interconversion. This Streptococcus equi subsp. zooepidemicus (strain H70) protein is Uronate isomerase.